Reading from the N-terminus, the 725-residue chain is ATP-dependent zinc metalloprotease FtsH (725 aa).

Topologically, residues 1-11 are cytoplasmic; sequence MDKMKKPKINW. Residues 12–32 form a helical membrane-spanning segment; it reads LLIVIVGIIAALLITVLVLLF. The Extracellular segment spans residues 33–160; the sequence is SPKTQPKSFD…LFGQHIVQEN (128 aa). Residues 161–181 form a helical membrane-spanning segment; the sequence is GFITFIKAIWFPALIAIIIFL. At 182–725 the chain is on the cytoplasmic side; that stretch reads GYKAQSRAAS…EEETLAEKAE (544 aa). Residue 252 to 259 coordinates ATP; it reads GPPGTGKT. A Zn(2+)-binding site is contributed by histidine 474. Glutamate 475 is an active-site residue. Positions 478 and 552 each coordinate Zn(2+). The tract at residues 680 to 725 is disordered; the sequence is QVNESQEKDKQKNAQIKEDLSKMDKKDNLTKAKDKGEEETLAEKAE. Over residues 684-725 the composition is skewed to basic and acidic residues; sequence SQEKDKQKNAQIKEDLSKMDKKDNLTKAKDKGEEETLAEKAE.

In the central section; belongs to the AAA ATPase family. It in the C-terminal section; belongs to the peptidase M41 family. In terms of assembly, homohexamer. Zn(2+) serves as cofactor.

The protein localises to the cell membrane. Its function is as follows. Acts as a processive, ATP-dependent zinc metallopeptidase for both cytoplasmic and membrane proteins. Plays a role in the quality control of integral membrane proteins. The polypeptide is ATP-dependent zinc metalloprotease FtsH (Mycoplasmopsis pulmonis (strain UAB CTIP) (Mycoplasma pulmonis)).